Reading from the N-terminus, the 360-residue chain is Phospho-N-acetylmuramoyl-pentapeptide-transferase (360 aa).

Over Met1–Arg25 the chain is Periplasmic. Residues Ala26–Ala46 traverse the membrane as a helical segment. Over His47–Thr71 the chain is Cytoplasmic. Residues Pro72–Tyr92 form a helical membrane-spanning segment. Pro93 is a topological domain (periplasmic). A helical transmembrane segment spans residues Ser94–Val114. The Cytoplasmic portion of the chain corresponds to Asp115–Arg131. Residues Trp132–Gly152 form a helical membrane-spanning segment. The Periplasmic portion of the chain corresponds to Lys153 to Asp167. Residues Val168 to Gly188 form a helical membrane-spanning segment. The Cytoplasmic segment spans residues Asn189–Asp198. Residues Gly199–Thr219 form a helical membrane-spanning segment. Over Gly220–His235 the chain is Periplasmic. Residues Ala236 to Phe256 form a helical membrane-spanning segment. The Cytoplasmic portion of the chain corresponds to Asn257–Gln262. A helical membrane pass occupies residues Val263–Leu283. Topologically, residues Leu284–Glu287 are periplasmic. Residues Phe288–Val308 traverse the membrane as a helical segment. The Cytoplasmic segment spans residues Gly309 to Arg337. Residues Val338–Lys358 traverse the membrane as a helical segment. Residues Val359–Arg360 lie on the Periplasmic side of the membrane.

This sequence belongs to the glycosyltransferase 4 family. MraY subfamily. The cofactor is Mg(2+).

Its subcellular location is the cell inner membrane. It catalyses the reaction UDP-N-acetyl-alpha-D-muramoyl-L-alanyl-gamma-D-glutamyl-meso-2,6-diaminopimeloyl-D-alanyl-D-alanine + di-trans,octa-cis-undecaprenyl phosphate = di-trans,octa-cis-undecaprenyl diphospho-N-acetyl-alpha-D-muramoyl-L-alanyl-D-glutamyl-meso-2,6-diaminopimeloyl-D-alanyl-D-alanine + UMP. The protein operates within cell wall biogenesis; peptidoglycan biosynthesis. Functionally, catalyzes the initial step of the lipid cycle reactions in the biosynthesis of the cell wall peptidoglycan: transfers peptidoglycan precursor phospho-MurNAc-pentapeptide from UDP-MurNAc-pentapeptide onto the lipid carrier undecaprenyl phosphate, yielding undecaprenyl-pyrophosphoryl-MurNAc-pentapeptide, known as lipid I. The protein is Phospho-N-acetylmuramoyl-pentapeptide-transferase of Escherichia coli O7:K1 (strain IAI39 / ExPEC).